Here is a 60-residue protein sequence, read N- to C-terminus: Large ribosomal subunit protein bL32 (60 aa).

Residues 1-46 form a disordered region; it reads MAVQQNKKSPSKRGMHRSHNALNTPGTAIEPTTGEVHLRHHISPTG. Basic residues predominate over residues 9–19; it reads SPSKRGMHRSH.

This sequence belongs to the bacterial ribosomal protein bL32 family.

The sequence is that of Large ribosomal subunit protein bL32 from Leptothrix cholodnii (strain ATCC 51168 / LMG 8142 / SP-6) (Leptothrix discophora (strain SP-6)).